The sequence spans 534 residues: CTP synthase (534 aa).

The tract at residues 1–267 (MTKYIFVTGG…DQIVCDHLKL (267 aa)) is amidoligase domain. A CTP-binding site is contributed by Ser13. Residue Ser13 participates in UTP binding. Position 14-19 (14-19 (SIGKGI)) interacts with ATP. Tyr54 is an L-glutamine binding site. Asp71 contacts ATP. Residues Asp71 and Glu141 each coordinate Mg(2+). Residues 148 to 150 (DIE), 188 to 193 (KTKPTQ), and Lys224 contribute to the CTP site. UTP-binding positions include 188-193 (KTKPTQ) and Lys224. 240 to 242 (RDV) is a binding site for ATP. Residues 292 to 534 (KIALVGKYVE…FVTAAIKNSN (243 aa)) form the Glutamine amidotransferase type-1 domain. Gly354 is an L-glutamine binding site. The Nucleophile; for glutamine hydrolysis role is filled by Cys381. L-glutamine is bound by residues 382-385 (LGMQ), Glu405, and Arg463. Catalysis depends on residues His508 and Glu510.

This sequence belongs to the CTP synthase family. As to quaternary structure, homotetramer.

It carries out the reaction UTP + L-glutamine + ATP + H2O = CTP + L-glutamate + ADP + phosphate + 2 H(+). It catalyses the reaction L-glutamine + H2O = L-glutamate + NH4(+). The catalysed reaction is UTP + NH4(+) + ATP = CTP + ADP + phosphate + 2 H(+). Its pathway is pyrimidine metabolism; CTP biosynthesis via de novo pathway; CTP from UDP: step 2/2. Allosterically activated by GTP, when glutamine is the substrate; GTP has no effect on the reaction when ammonia is the substrate. The allosteric effector GTP functions by stabilizing the protein conformation that binds the tetrahedral intermediate(s) formed during glutamine hydrolysis. Inhibited by the product CTP, via allosteric rather than competitive inhibition. Its function is as follows. Catalyzes the ATP-dependent amination of UTP to CTP with either L-glutamine or ammonia as the source of nitrogen. Regulates intracellular CTP levels through interactions with the four ribonucleotide triphosphates. The chain is CTP synthase from Streptococcus pyogenes serotype M18 (strain MGAS8232).